The chain runs to 175 residues: MGKITFFEDRSFQGRCYECSSDCPNLQTYFSRCNSVRVDSGCWMLYERPNYQGHQYFLRRGEYPDYQQWMGFSDSIRSCCLIPQHSGTYRMRIYEKDDFRGQMSEITDDCLSLQDRFHFSEIHSLNVMEGCWVLYEMPSYRGRQYLLRPGEYRRYLDWGAANAKVGSFRRVMDFY.

2 Beta/gamma crystallin 'Greek key' domains span residues 2 to 40 (GKIT…RVDS) and 41 to 83 (GCWM…CLIP). Residues 84–88 (QHSGT) form a connecting peptide region. 2 Beta/gamma crystallin 'Greek key' domains span residues 89–129 (YRMR…NVME) and 130–172 (GCWV…RRVM).

Belongs to the beta/gamma-crystallin family.

In terms of biological role, crystallins are the dominant structural components of the vertebrate eye lens. The protein is Gamma-crystallin B (Crygb) of Mus musculus (Mouse).